Reading from the N-terminus, the 68-residue chain is Large ribosomal subunit protein bL33c (68 aa).

Belongs to the bacterial ribosomal protein bL33 family.

The protein localises to the plastid. The polypeptide is Large ribosomal subunit protein bL33c (Cuscuta reflexa (Southern Asian dodder)).